The following is a 300-amino-acid chain: 4-hydroxy-tetrahydrodipicolinate synthase (300 aa).

Residue threonine 45 participates in pyruvate binding. The Proton donor/acceptor role is filled by tyrosine 140. Catalysis depends on lysine 169, which acts as the Schiff-base intermediate with substrate. Pyruvate is bound at residue isoleucine 210.

It belongs to the DapA family. Homotetramer; dimer of dimers.

The protein localises to the cytoplasm. It carries out the reaction L-aspartate 4-semialdehyde + pyruvate = (2S,4S)-4-hydroxy-2,3,4,5-tetrahydrodipicolinate + H2O + H(+). Its pathway is amino-acid biosynthesis; L-lysine biosynthesis via DAP pathway; (S)-tetrahydrodipicolinate from L-aspartate: step 3/4. Its function is as follows. Catalyzes the condensation of (S)-aspartate-beta-semialdehyde [(S)-ASA] and pyruvate to 4-hydroxy-tetrahydrodipicolinate (HTPA). The sequence is that of 4-hydroxy-tetrahydrodipicolinate synthase from Helicobacter pylori (strain Shi470).